Reading from the N-terminus, the 122-residue chain is Heat-labile enterotoxin IIB, B chain (122 aa).

The signal sequence occupies residues 1–23; sequence MSFKKIIKAFVIMAALVSVQAHA. Cys-33 and Cys-104 form a disulfide bridge.

In terms of assembly, heterohexamer of one A chain and of five B chains.

In terms of biological role, the biological activity of the toxin is produced by the A chain, which activates intracellular adenyl cyclase. In Escherichia coli, this protein is Heat-labile enterotoxin IIB, B chain.